Consider the following 329-residue polypeptide: GTPase Obg (329 aa).

Residues 1–159 (MQFIDQAIID…WSLQLELKLL (159 aa)) form the Obg domain. Residues 160 to 328 (AEVGIIGLPN…LLSSIWNELG (169 aa)) form the OBG-type G domain. Residues 166-173 (GLPNAGKS), 191-195 (FTTLI), 213-216 (DIPG), 280-283 (NKKE), and 309-311 (SAV) each bind ATP. Residues Ser173 and Thr193 each coordinate Mg(2+).

It belongs to the TRAFAC class OBG-HflX-like GTPase superfamily. OBG GTPase family. In terms of assembly, monomer. Mg(2+) is required as a cofactor.

The protein resides in the cytoplasm. An essential GTPase which binds GTP, GDP and possibly (p)ppGpp with moderate affinity, with high nucleotide exchange rates and a fairly low GTP hydrolysis rate. Plays a role in control of the cell cycle, stress response, ribosome biogenesis and in those bacteria that undergo differentiation, in morphogenesis control. The chain is GTPase Obg from Prochlorococcus marinus (strain NATL2A).